A 547-amino-acid polypeptide reads, in one-letter code: Probable bifunctional tRNA threonylcarbamoyladenosine biosynthesis protein (547 aa).

The tract at residues 1-329 is kae1; that stretch reads MKKTFILGIE…FRTDDVKVTW (329 aa). H113, H117, and Y134 together coordinate Fe cation. Residues 134–138, D166, G179, E183, and N262 each bind L-threonylcarbamoyladenylate; that span reads YVSGA. D290 contacts Fe cation. The 208-residue stretch at 340–547 folds into the Protein kinase domain; the sequence is EISPETFFRM…EEIKKRARYA (208 aa). Residues 355–363 and K377 each bind ATP; that span reads LDNGAEAVV. D464 serves as the catalytic Proton acceptor; for kinase activity.

The protein in the N-terminal section; belongs to the KAE1 / TsaD family. In the C-terminal section; belongs to the protein kinase superfamily. Tyr protein kinase family. BUD32 subfamily. Component of the KEOPS complex that consists of Kae1, Bud32, Cgi121 and Pcc1; the whole complex dimerizes. Requires Fe(2+) as cofactor.

It localises to the cytoplasm. The enzyme catalyses L-seryl-[protein] + ATP = O-phospho-L-seryl-[protein] + ADP + H(+). It catalyses the reaction L-threonyl-[protein] + ATP = O-phospho-L-threonyl-[protein] + ADP + H(+). The catalysed reaction is L-threonylcarbamoyladenylate + adenosine(37) in tRNA = N(6)-L-threonylcarbamoyladenosine(37) in tRNA + AMP + H(+). Functionally, required for the formation of a threonylcarbamoyl group on adenosine at position 37 (t(6)A37) in tRNAs that read codons beginning with adenine. Is a component of the KEOPS complex that is probably involved in the transfer of the threonylcarbamoyl moiety of threonylcarbamoyl-AMP (TC-AMP) to the N6 group of A37. The Kae1 domain likely plays a direct catalytic role in this reaction. The Bud32 domain probably displays kinase activity that regulates Kae1 function. This Methanosarcina mazei (strain ATCC BAA-159 / DSM 3647 / Goe1 / Go1 / JCM 11833 / OCM 88) (Methanosarcina frisia) protein is Probable bifunctional tRNA threonylcarbamoyladenosine biosynthesis protein.